A 2523-amino-acid polypeptide reads, in one-letter code: uncharacterized protein (2523 aa).

This sequence belongs to the mycobacterial PPE family.

Its function is as follows. Probably plays a role in host phagosome maturation arrest. This is an uncharacterized protein from Mycobacterium tuberculosis (strain ATCC 25618 / H37Rv).